The sequence spans 306 residues: Acetyl-coenzyme A carboxylase carboxyl transferase subunit beta (306 aa).

Residues 25–294 (LWIKDPTSGE…VVTPSPPSPT (270 aa)) enclose the CoA carboxyltransferase N-terminal domain. Residues 284-306 (AVVTPSPPSPTDSQTSLSKTKAA) form a disordered region.

It belongs to the AccD/PCCB family. As to quaternary structure, acetyl-CoA carboxylase is a heterohexamer composed of biotin carboxyl carrier protein (AccB), biotin carboxylase (AccC) and two subunits each of ACCase subunit alpha (AccA) and ACCase subunit beta (AccD).

The protein localises to the cytoplasm. The catalysed reaction is N(6)-carboxybiotinyl-L-lysyl-[protein] + acetyl-CoA = N(6)-biotinyl-L-lysyl-[protein] + malonyl-CoA. It participates in lipid metabolism; malonyl-CoA biosynthesis; malonyl-CoA from acetyl-CoA: step 1/1. Component of the acetyl coenzyme A carboxylase (ACC) complex. Biotin carboxylase (BC) catalyzes the carboxylation of biotin on its carrier protein (BCCP) and then the CO(2) group is transferred by the transcarboxylase to acetyl-CoA to form malonyl-CoA. The sequence is that of Acetyl-coenzyme A carboxylase carboxyl transferase subunit beta from Bartonella tribocorum (strain CIP 105476 / IBS 506).